Reading from the N-terminus, the 1049-residue chain is DEAD-box ATP-dependent RNA helicase 42 (1049 aa).

Disordered regions lie at residues 1–279 and 299–358; these read MGSS…DEID and MPAA…DDEE. Basic and acidic residues predominate over residues 64-106; it reads KERDREERKAREREEREKEKERERARRREERDREERSRRREAA. Basic residues predominate over residues 118–131; sequence RKRRRRSSHHHHHH. 2 stretches are compositionally biased toward basic and acidic residues: residues 161–170 and 181–199; these read KKEEEQKQLD and KEWQ…REQE. Over residues 201-214 the composition is skewed to low complexity; that stretch reads AGVGTSAAAAAAPA. The span at 229–239 shows a compositional bias: acidic residues; it reads DGEESDEEGNQ. Positions 262 to 272 are enriched in low complexity; the sequence is NGGDNANGANA. Basic and acidic residues predominate over residues 304 to 313; it reads VDDKNDKSAK. Over residues 335 to 358 the composition is skewed to acidic residues; the sequence is EDSDSDYADDEDDEGGSEDEDDEE. A Q motif motif is present at residues 424–452; that stretch reads KTWVQSGLTSKLLDTIKKLGFEKPMSIQA. A Helicase ATP-binding domain is found at 455–633; sequence LPIIMSGRDC…RKVLTKPVEI (179 aa). 468–475 contacts ATP; it reads AKTGSGKT. A DEAD box motif is present at residues 581–584; the sequence is DEAD. The Helicase C-terminal domain occupies 644–805; it reads DITQLVEVRP…AVPEDLKGLA (162 aa). Residues 816–868 are disordered; it reads TEQAHGTGYGGSGFKFNEEEDEARKSAKKAQAREYGYEEDKSDSDSDEEGGVR. Residues 855 to 864 show a composition bias toward acidic residues; the sequence is DKSDSDSDEE. A coiled-coil region spans residues 1012–1037; that stretch reads TELSVKKAKAELKRVLEDCANHALNL.

The protein belongs to the DEAD box helicase family. DDX46/PRP5 subfamily.

It catalyses the reaction ATP + H2O = ADP + phosphate + H(+). In Oryza sativa subsp. japonica (Rice), this protein is DEAD-box ATP-dependent RNA helicase 42.